The sequence spans 1406 residues: DNA-directed RNA polymerase subunit beta' (1406 aa).

Residues Cys-72, Cys-74, Cys-87, and Cys-90 each coordinate Zn(2+). Asp-462, Asp-464, and Asp-466 together coordinate Mg(2+). Zn(2+) contacts are provided by Cys-816, Cys-891, Cys-898, and Cys-901.

Belongs to the RNA polymerase beta' chain family. The RNAP catalytic core consists of 2 alpha, 1 beta, 1 beta' and 1 omega subunit. When a sigma factor is associated with the core the holoenzyme is formed, which can initiate transcription. The cofactor is Mg(2+). Zn(2+) serves as cofactor.

It carries out the reaction RNA(n) + a ribonucleoside 5'-triphosphate = RNA(n+1) + diphosphate. In terms of biological role, DNA-dependent RNA polymerase catalyzes the transcription of DNA into RNA using the four ribonucleoside triphosphates as substrates. The chain is DNA-directed RNA polymerase subunit beta' from Psychrobacter arcticus (strain DSM 17307 / VKM B-2377 / 273-4).